The sequence spans 463 residues: ATP synthase subunit beta (463 aa).

152–159 contributes to the ATP binding site; sequence GGAGVGKT.

This sequence belongs to the ATPase alpha/beta chains family. In terms of assembly, F-type ATPases have 2 components, CF(1) - the catalytic core - and CF(0) - the membrane proton channel. CF(1) has five subunits: alpha(3), beta(3), gamma(1), delta(1), epsilon(1). CF(0) has three main subunits: a(1), b(2) and c(9-12). The alpha and beta chains form an alternating ring which encloses part of the gamma chain. CF(1) is attached to CF(0) by a central stalk formed by the gamma and epsilon chains, while a peripheral stalk is formed by the delta and b chains.

The protein localises to the cell inner membrane. It catalyses the reaction ATP + H2O + 4 H(+)(in) = ADP + phosphate + 5 H(+)(out). Its function is as follows. Produces ATP from ADP in the presence of a proton gradient across the membrane. The catalytic sites are hosted primarily by the beta subunits. In Shewanella sp. (strain MR-7), this protein is ATP synthase subunit beta.